The chain runs to 545 residues: CTP synthase (545 aa).

Residues 1–266 (MATNYIFVTG…DDIVTKRFNL (266 aa)) are amidoligase domain. Residue Ser-14 coordinates CTP. Ser-14 is a UTP binding site. Residues 15-20 (SLGKGI) and Asp-72 each bind ATP. 2 residues coordinate Mg(2+): Asp-72 and Glu-140. CTP is bound by residues 147–149 (DIE), 187–192 (KTKPTQ), and Lys-223. UTP is bound by residues 187 to 192 (KTKPTQ) and Lys-223. 239 to 241 (RDV) contributes to the ATP binding site. The region spanning 291 to 542 (TVGFVGKYVE…IEAAGEFHKE (252 aa)) is the Glutamine amidotransferase type-1 domain. L-glutamine is bound at residue Gly-352. The Nucleophile; for glutamine hydrolysis role is filled by Cys-379. L-glutamine contacts are provided by residues 380-383 (LGMQ), Glu-403, and Arg-470. Active-site residues include His-515 and Glu-517.

The protein belongs to the CTP synthase family. Homotetramer.

It carries out the reaction UTP + L-glutamine + ATP + H2O = CTP + L-glutamate + ADP + phosphate + 2 H(+). It catalyses the reaction L-glutamine + H2O = L-glutamate + NH4(+). The catalysed reaction is UTP + NH4(+) + ATP = CTP + ADP + phosphate + 2 H(+). The protein operates within pyrimidine metabolism; CTP biosynthesis via de novo pathway; CTP from UDP: step 2/2. Its activity is regulated as follows. Allosterically activated by GTP, when glutamine is the substrate; GTP has no effect on the reaction when ammonia is the substrate. The allosteric effector GTP functions by stabilizing the protein conformation that binds the tetrahedral intermediate(s) formed during glutamine hydrolysis. Inhibited by the product CTP, via allosteric rather than competitive inhibition. Catalyzes the ATP-dependent amination of UTP to CTP with either L-glutamine or ammonia as the source of nitrogen. Regulates intracellular CTP levels through interactions with the four ribonucleotide triphosphates. This chain is CTP synthase, found in Idiomarina loihiensis (strain ATCC BAA-735 / DSM 15497 / L2-TR).